Consider the following 161-residue polypeptide: MRHQHGLFMLALLAFLFVITVLGTDSGKKEKQEKKVKKSDCGEWQWSVCVPTSGDCGLGTREGTRSGKECKQTIKTQKCKIPCNWKKQFGAECKYQFQEWGDCDPDTGLKTRSGSLKRALHNAECQKTVTLSKPCGKVTKPKLQESKKKKKEGKNKEKLLD.

The signal sequence occupies residues 1–23 (MRHQHGLFMLALLAFLFVITVLG). Disulfide bonds link cysteine 41–cysteine 70, cysteine 49–cysteine 79, cysteine 56–cysteine 83, cysteine 93–cysteine 125, and cysteine 103–cysteine 135. Chondroitin sulfate binding stretches follow at residues 86–93 (KKQFGAEC) and 117–125 (KRALHNAEC). The disordered stretch occupies residues 136–161 (GKVTKPKLQESKKKKKEGKNKEKLLD). The segment at 141 to 161 (PKLQESKKKKKEGKNKEKLLD) is chondroitin sulfate A binding.

Belongs to the pleiotrophin family. In terms of tissue distribution, expressed in high levels in brain and eye. Lower levels in bone. In the tailbud embryo stage, it is expressed exclusively in the central nervous system, especially in the hind region of the brain.

Its subcellular location is the secreted. Functionally, secreted growth factor that mediates its signal through cell-surface proteoglycan and non-proteoglycan receptors. Binds cell-surface proteoglycan receptor via their chondroitin sulfate (CS) groups. Thereby regulates many processes like cell proliferation, cell survival, cell growth, cell differentiation and cell migration. Has antibacterial activity against both Gram-positive and Gram-negative bacteria. The chain is Pleiotrophin-A (ptn-a) from Xenopus laevis (African clawed frog).